Consider the following 318-residue polypeptide: MMIMREILISECIELLRSHKFIVSKPLGRSCFDMVASKEDIRLILKILKNIDSLSRDQSKELKKISKILHGTPLIIGIRTRNAPMEHGVVYDRYNIKAVTFETFRDYLEGSPPMVYANRGGFFVKIDGKVLKEVREAMGISVGKLAEVAGVSRKAIYKYETQMANPSVDVALKIEEFLDVPLVKGIDLFEPVDDEDVENKLENLEDFKKEAINFLNELGFKSFVVEKAPFDAVAEKDMDNNLNILLTNIEEKDNEEVKRKALFVRELSRLLDGYSLLILEEKEKEYKNLPVVSIEELKKMDDALELIEHIKSMLRDIR.

Residues 131 to 189 enclose the HTH cro/C1-type domain; it reads LKEVREAMGISVGKLAEVAGVSRKAIYKYETQMANPSVDVALKIEEFLDVPLVKGIDLF. Residues 142 to 161 constitute a DNA-binding region (H-T-H motif); the sequence is VGKLAEVAGVSRKAIYKYET.

The sequence is that of Putative HTH-type transcriptional regulatory protein MJ1164 from Methanocaldococcus jannaschii (strain ATCC 43067 / DSM 2661 / JAL-1 / JCM 10045 / NBRC 100440) (Methanococcus jannaschii).